A 259-amino-acid polypeptide reads, in one-letter code: MNLVDLWLTRSLSMCLLLQSFVLMILCFHSASMCPKGCLCSSSGGLNVTCSNANLKEIPRDLPPETVLLYLDSNQITSIPNEIFKDLHQLRVLNLSKNGIEFIDEHAFKGVAETLQTLDLSDNRIQSVHKNAFNNLKARARIANNPWHCDCTLQQVLRSMVSNHETAHNVICKTSVLDEHAGRPFLNAANDADLCNLPKKTTDYAMLVTMFGWFTMVISYVVYYVRQNQEDARRHLEYLKSLPSRQKKADEPDDISTVV.

A signal peptide spans 1–33 (MNLVDLWLTRSLSMCLLLQSFVLMILCFHSASM). Residues 34–64 (CPKGCLCSSSGGLNVTCSNANLKEIPRDLPP) form the LRRNT domain. Asparagine 47 carries N-linked (GlcNAc...) asparagine glycosylation. 3 LRR repeats span residues 65–86 (ETVL…IFKD), 89–110 (QLRV…AFKG), and 114–135 (TLQT…AFNN). Asparagine 94 carries N-linked (GlcNAc...) asparagine glycosylation. Residues 145–197 (NPWHCDCTLQQVLRSMVSNHETAHNVICKTSVLDEHAGRPFLNAANDADLCNL) form the LRRCT domain. The chain crosses the membrane as a helical span at residues 205–225 (AMLVTMFGWFTMVISYVVYYV).

Belongs to the LRRC3 family.

The protein localises to the membrane. This chain is Leucine-rich repeat-containing protein 3B (LRRC3B), found in Bos taurus (Bovine).